Reading from the N-terminus, the 188-residue chain is Sulfopyruvate decarboxylase subunit beta (188 aa).

It belongs to the TPP enzyme family. In terms of assembly, heterododecamer composed of 6 subunits alpha and 6 subunits beta. Thiamine diphosphate serves as cofactor.

It carries out the reaction 3-sulfopyruvate + H(+) = sulfoacetaldehyde + CO2. It functions in the pathway cofactor biosynthesis; coenzyme M biosynthesis; sulfoacetaldehyde from phosphoenolpyruvate and sulfite: step 4/4. Its activity is regulated as follows. Inhibited by oxygen when heated in air at 80 degrees Celsius. The enzyme is reactivated by addition of dithionite. Its function is as follows. Involved in the biosynthesis of the coenzyme M (2-mercaptoethanesulfonic acid). Catalyzes the decarboxylation of sulfopyruvate to sulfoacetaldehyde. This is Sulfopyruvate decarboxylase subunit beta from Methanocaldococcus jannaschii (strain ATCC 43067 / DSM 2661 / JAL-1 / JCM 10045 / NBRC 100440) (Methanococcus jannaschii).